Reading from the N-terminus, the 202-residue chain is MEHYISLFVKAVFVENMALAFFLGMCTFIAISKKVETAIGLGIAVIVVQTITVPANNLIYTYLLKDGALAWAGLPEVDLSFLGLLSYIGVIAAIVQILEMLLDKYVPSLYNALGVFLPLITVNCAIMAGSLFMVERDYNLAESTVYGVGSGFSWALAIAALAGIREKLKYSDVPEGLQGLGITFITIGLMSLGFMSFSGVQL.

6 consecutive transmembrane segments (helical) span residues 11–31 (AVFVENMALAFFLGMCTFIAI), 35–55 (VETAIGLGIAVIVVQTITVPA), 81–101 (FLGLLSYIGVIAAIVQILEML), 114–134 (GVFLPLITVNCAIMAGSLFMV), 144–164 (TVYGVGSGFSWALAIAALAGI), and 180–200 (LGITFITIGLMSLGFMSFSGV).

Belongs to the NqrDE/RnfAE family. As to quaternary structure, composed of six subunits; NqrA, NqrB, NqrC, NqrD, NqrE and NqrF.

The protein resides in the cell inner membrane. It carries out the reaction a ubiquinone + n Na(+)(in) + NADH + H(+) = a ubiquinol + n Na(+)(out) + NAD(+). Functionally, NQR complex catalyzes the reduction of ubiquinone-1 to ubiquinol by two successive reactions, coupled with the transport of Na(+) ions from the cytoplasm to the periplasm. NqrA to NqrE are probably involved in the second step, the conversion of ubisemiquinone to ubiquinol. This Pseudomonas aeruginosa (strain LESB58) protein is Na(+)-translocating NADH-quinone reductase subunit E.